Consider the following 204-residue polypeptide: MKTTVGSRPNKYWPIVAGIGVVGLFAYLIFSNQKHSTESGDNIHKFANGGSYRDGSKSISYNRNHPFAYGNASSPGMLLPAMLTIIGIISYLWRTRDSVLGDSGGNNSCGEDCQGECLNGHSRRSLLCDIGXSFYHCSMAIVYISKQYTYGDWSLLLSRSELCEDLWNRGYEPRSYCGHPPLAEVPFWGISDVGRFNQCFEYSS.

Over 1-11 (MKTTVGSRPNK) the chain is Cytoplasmic. Residues 12 to 32 (YWPIVAGIGVVGLFAYLIFSN) form a helical membrane-spanning segment. Topologically, residues 33 to 72 (QKHSTESGDNIHKFANGGSYRDGSKSISYNRNHPFAYGNA) are lumenal. The chain crosses the membrane as a helical span at residues 73–93 (SSPGMLLPAMLTIIGIISYLW). Over 94-204 (RTRDSVLGDS…RFNQCFEYSS (111 aa)) the chain is Cytoplasmic.

This sequence belongs to the virgaviridae/benyvirus TGB2 movement protein family. In terms of assembly, interacts with movement protein TGB3. TGB1-TGB3-TGB2 complex formation is enhanced by ATP hydrolysis.

It is found in the host cell junction. The protein resides in the host plasmodesma. Its subcellular location is the host endoplasmic reticulum membrane. It localises to the host cytoplasm. The protein localises to the host cytoskeleton. In terms of biological role, participates in the transport of viral genome to neighboring plant cells directly through plasmodesmata, without any budding. TGBp2 and TGBp3 are necessary for intracellular delivery of TGBp1-containing vRNPs to plasmodesmata. Can gate plasmodesmata and increase their size exclusion limit. To a lesser extent than TGB3, induces host actin cytoskeleton network thickening, which probably plays a major role in virus cell-to-cell movement. The protein is Movement protein TGB2 of Barley stripe mosaic virus (BSMV).